Here is a 1453-residue protein sequence, read N- to C-terminus: Collagen alpha-1(I) chain (1453 aa).

A signal peptide spans 1–22; the sequence is MFSFVDLRLLLLLGATALLTHG. The propeptide at 23 to 151 is N-terminal propeptide; the sequence is QEDIPEVSCI…PPGLGGNFAS (129 aa). In terms of domain architecture, VWFC spans 29–87; the sequence is VSCIHNGLRVPNGETWKPDVCLICICHNGTAVCDGVLCKEDLDCPNPQKREGECCPFCP. A glycan (N-linked (GlcNAc...) asparagine) is linked at Asn56. Positions 97–1206 are disordered; that stretch reads VIGVEGPKGD…KSQDGGRYYR (1110 aa). Composition is skewed to pro residues over residues 109 to 118 and 128 to 143; these read PQGPRGPVGP and PGLPGPPGPPGPPGPP. The residue at position 152 (Gln152) is a Pyrrolidone carboxylic acid. Positions 152-167 are nonhelical region (N-terminal); the sequence is QMSYGYDEKSAGVSVP. Lys160 bears the Allysine mark. Ser161 carries the post-translational modification Phosphoserine. The interval 168 to 1181 is triple-helical region; sequence GPMGPSGPRG…PGPPGPPGPP (1014 aa). Residues Pro179, Pro182, Pro185, Pro194, Pro197, Pro200, Pro215, Pro230, Pro236, Pro245, and Pro251 each carry the 4-hydroxyproline modification. Residues 187–206 are compositionally biased toward low complexity; that stretch reads PQGFQGPPGEPGEPGASGPM. The segment covering 218–232 has biased composition (basic and acidic residues); the sequence is NGDDGEAGKPGRPGE. The residue at position 254 (Lys254) is a 5-hydroxylysine; alternate. Lys254 carries an O-linked (Gal...) hydroxylysine; alternate glycan. Residue Ser260 is modified to Phosphoserine. 4-hydroxyproline is present on residues Pro278, Pro281, Pro287, Pro296, and Pro302. A compositionally biased stretch (low complexity) spans 307-320; the sequence is SAGARGNDGAVGAA. Residues 322–334 show a composition bias toward pro residues; it reads PPGPTGPTGPPGF. 4-hydroxyproline occurs at positions 323, 332, 335, 362, 365, 377, 383, 392, 398, 401, and 416. A compositionally biased stretch (low complexity) spans 335 to 361; that stretch reads PGAAGAKGEAGPQGARGSEGPQGVRGE. Residues 368-418 show a composition bias toward low complexity; the sequence is AGAAGPAGNPGADGQPGAKGANGAPGIAGAPGFPGARGPSGPQGPSGAPGP. Position 419 is a 5-hydroxylysine (Lys419). 8 positions are modified to 4-hydroxyproline: Pro425, Pro428, Pro440, Pro449, Pro464, Pro470, Pro479, and Pro485. Positions 474-483 are enriched in gly residues; the sequence is GERGGPGSRG. Lys494 carries the post-translational modification 5-hydroxylysine. 28 positions are modified to 4-hydroxyproline: Pro503, Pro512, Pro518, Pro524, Pro533, Pro536, Pro545, Pro554, Pro560, Pro572, Pro581, Pro590, Pro593, Pro611, Pro629, Pro635, Pro641, Pro647, Pro653, Pro659, Pro671, Pro680, Pro692, Pro704, Pro707, Pro713, Pro719, and Pro728. The span at 527-566 shows a compositional bias: low complexity; it reads KGLTGSPGSPGPDGKTGPPGPAGQDGRPGPAGPPGARGQA. Low complexity predominate over residues 623 to 650; the sequence is QGPAGSPGFQGLPGPAGPPGEAGKPGEQ. 2 stretches are compositionally biased toward low complexity: residues 685-695 and 703-716; these read PRGNNGAPGND and APGAPGSQGAPGLQ. A Cell attachment site motif is present at residues 734–736; it reads RGD. Residue Lys740 is modified to 5-hydroxylysine. A 4-hydroxyproline mark is found at Pro746, Pro761, and Pro767. The segment covering 773-787 has biased composition (low complexity); the sequence is TGPSGPAGPTGARGA. Residue Ser776 is modified to Phosphoserine. 8 positions are modified to 4-hydroxyproline: Pro788, Pro794, Pro797, Pro806, Pro812, Pro830, Pro839, and Pro848. Low complexity predominate over residues 800–815; the sequence is AGFAGPPGADGQPGAK. Positions 829–841 are enriched in pro residues; the sequence is PPGPAGPAGPPGP. Over residues 842-872 the composition is skewed to low complexity; the sequence is IGNVGAPGPKGSRGAAGPPGATGFPGAAGRV. Lys851 is modified (5-hydroxylysine). 2 positions are modified to 4-hydroxyproline: Pro860 and Pro866. A 3-hydroxyproline modification is found at Pro874. 16 positions are modified to 4-hydroxyproline: Pro875, Pro884, Pro887, Pro908, Pro917, Pro926, Pro935, Pro953, Pro962, Pro965, Pro971, Pro986, Pro992, Pro998, Pro1007, and Pro1013. A compositionally biased stretch (low complexity) spans 901–910; it reads ETGPAGRPGE. Over residues 920 to 935 the composition is skewed to low complexity; that stretch reads AGEKGSPGADGPAGSP. Pro residues predominate over residues 985 to 995; that stretch reads PPGPMGPPGLA. Residues 997-1012 show a composition bias toward low complexity; it reads PPGESGREGSPGAEGS. Lys1022 carries the post-translational modification 5-hydroxylysine. Over residues 1031-1046 the composition is skewed to pro residues; that stretch reads AGPPGAPGAPGAPGPV. 4-hydroxyproline is present on residues Pro1034, Pro1037, and Pro1040. The segment covering 1067 to 1081 has biased composition (low complexity); sequence IGPAGARGPAGPQGP. The Cell attachment site motif lies at 1082 to 1084; that stretch reads RGD. The segment covering 1082 to 1096 has biased composition (basic and acidic residues); that stretch reads RGDKGETGEQGDRGI. Residue Lys1085 is modified to 5-hydroxylysine. Lys1097 bears the 5-hydroxylysine; alternate mark. A glycan (O-linked (Gal...) hydroxylysine; alternate) is linked at Lys1097. A compositionally biased stretch (low complexity) spans 1102–1148; the sequence is FSGLQGPPGSPGSPGEQGPSGASGPAGPRGPPGSAGSPGKDGLNGLP. 4-hydroxyproline is present on residues Pro1109, Pro1112, Pro1115, Pro1133, and Pro1148. Residue Pro1153 is modified to 3-hydroxyproline. 4-hydroxyproline is present on Pro1154. Residues 1166 to 1181 are compositionally biased toward pro residues; it reads AGPPGPPGPPGPPGPP. At Pro1168 the chain carries 3-hydroxyproline. Pro1169 carries the post-translational modification 4-hydroxyproline. A 3-hydroxyproline modification is found at Pro1171. Pro1172 is subject to 4-hydroxyproline. Pro1174 carries the 3-hydroxyproline modification. Pro1175, Pro1178, and Pro1181 each carry 4-hydroxyproline. Residues 1176 to 1186 are major antigenic determinant (of neutral salt-extracted rat skin collagen); it reads GPPGPPSGGYD. Positions 1182 to 1207 are nonhelical region (C-terminal); it reads SGGYDFSFLPQPPQEKSQDGGRYYRA. Position 1197 is an allysine (Lys1197). Residues 1197 to 1206 are compositionally biased toward basic and acidic residues; the sequence is KSQDGGRYYR. Residues 1208-1453 constitute a propeptide, C-terminal propeptide; sequence DDANVVRDRD…GMDIGPACFV (246 aa). Positions 1218 to 1453 constitute a Fibrillar collagen NC1 domain; that stretch reads LEVDTTLKSL…GMDIGPACFV (236 aa). 3 disulfides stabilise this stretch: Cys1248–Cys1280, Cys1288–Cys1451, and Cys1359–Cys1404. Residues Asp1266, Asn1268, Gln1269, Cys1271, and Asp1274 each contribute to the Ca(2+) site. Asn1354 carries an N-linked (GlcNAc...) asparagine glycan.

Belongs to the fibrillar collagen family. In terms of assembly, trimers of one alpha 2(I) and two alpha 1(I) chains. Interacts with MRC2. Interacts with TRAM2. Interacts with MFAP4 in a Ca (2+)-dependent manner. Post-translationally, contains mostly 4-hydroxyproline. Proline residues at the third position of the tripeptide repeating unit (G-X-Y) are hydroxylated in some or all of the chains. Contains 3-hydroxyproline at a few sites. This modification occurs on the first proline residue in the sequence motif Gly-Pro-Hyp, where Hyp is 4-hydroxyproline. In terms of processing, lysine residues at the third position of the tripeptide repeating unit (G-X-Y) are 5-hydroxylated in some or all of the chains. Post-translationally, O-glycosylated on hydroxylated lysine residues. The O-linked glycan consists of a Glc-Gal disaccharide. Forms the fibrils of tendon, ligaments and bones. In bones the fibrils are mineralized with calcium hydroxyapatite.

It localises to the secreted. The protein resides in the extracellular space. Its subcellular location is the extracellular matrix. Type I collagen is a member of group I collagen (fibrillar forming collagen). In Rattus norvegicus (Rat), this protein is Collagen alpha-1(I) chain (Col1a1).